The following is a 68-amino-acid chain: ATP-dependent 6-phosphofructokinase (68 aa).

An ATP-binding site is contributed by 17–20 (GDGT). Residue Asp18 participates in Mg(2+) binding. Residue Asp48 is the Proton acceptor of the active site.

It belongs to the phosphofructokinase type A (PFKA) family. PPi-dependent PFK group II subfamily. Atypical ATP-dependent clade 'X' sub-subfamily. As to quaternary structure, homotetramer. Requires Mg(2+) as cofactor.

The protein localises to the cytoplasm. The enzyme catalyses beta-D-fructose 6-phosphate + ATP = beta-D-fructose 1,6-bisphosphate + ADP + H(+). Its pathway is carbohydrate degradation; glycolysis; D-glyceraldehyde 3-phosphate and glycerone phosphate from D-glucose: step 3/4. Its activity is regulated as follows. Allosterically activated by AMP. In terms of biological role, catalyzes the phosphorylation of D-fructose 6-phosphate to fructose 1,6-bisphosphate by ATP, the first committing step of glycolysis. The sequence is that of ATP-dependent 6-phosphofructokinase (PFK) from Triticum aestivum (Wheat).